We begin with the raw amino-acid sequence, 342 residues long: tRNA-specific 2-thiouridylase MnmA (342 aa).

ATP is bound by residues 6–13 (LLSGGVDS) and Leu-32. The active-site Nucleophile is Cys-92. A disulfide bridge connects residues Cys-92 and Cys-191. Gly-116 contacts ATP. The interval 138–140 (KDQ) is interaction with tRNA. The active-site Cysteine persulfide intermediate is Cys-191. Positions 293 to 294 (RY) are interaction with tRNA.

Belongs to the MnmA/TRMU family.

The protein localises to the cytoplasm. The enzyme catalyses S-sulfanyl-L-cysteinyl-[protein] + uridine(34) in tRNA + AH2 + ATP = 2-thiouridine(34) in tRNA + L-cysteinyl-[protein] + A + AMP + diphosphate + H(+). Functionally, catalyzes the 2-thiolation of uridine at the wobble position (U34) of tRNA, leading to the formation of s(2)U34. The sequence is that of tRNA-specific 2-thiouridylase MnmA from Helicobacter acinonychis (strain Sheeba).